The primary structure comprises 127 residues: Small integral membrane protein 33 (127 aa).

A glycan (N-linked (GlcNAc...) asparagine) is linked at Asn15. Residues 38–58 (PLLAAIIAAFVLLAICIVLAV) traverse the membrane as a helical segment.

The protein localises to the membrane. The polypeptide is Small integral membrane protein 33 (Mus musculus (Mouse)).